Consider the following 61-residue polypeptide: 2S seed storage albumin protein (61 aa).

This sequence belongs to the 2S seed storage albumins family. The mature protein consists of a small and a large chain linked by 2 disulfide bonds.

Its function is as follows. This is a 2S seed storage protein. Inhibits cell-free protein synthesis. This is 2S seed storage albumin protein from Cucurbita moschata (Winter crookneck squash).